Reading from the N-terminus, the 295-residue chain is uncharacterized protein (295 aa).

The region spanning leucine 2 to valine 226 is the ABC transporter domain. Glycine 34–threonine 41 provides a ligand contact to ATP.

Belongs to the ABC transporter superfamily.

This is an uncharacterized protein from Bacillus subtilis (strain 168).